The chain runs to 84 residues: uncharacterized protein (84 aa).

Residues Met1–Ser21 form a disordered region. A helical transmembrane segment spans residues Tyr49–Lys69.

Its subcellular location is the membrane. This is an uncharacterized protein from Invertebrate iridescent virus 6 (IIV-6).